The chain runs to 946 residues: Leucine--tRNA ligase (946 aa).

The 'HIGH' region motif lies at 40–51 (PYPSGAGLHVGH). Positions 719-723 (KMSKS) match the 'KMSKS' region motif. Lysine 722 is a binding site for ATP.

The protein belongs to the class-I aminoacyl-tRNA synthetase family.

The protein localises to the cytoplasm. The catalysed reaction is tRNA(Leu) + L-leucine + ATP = L-leucyl-tRNA(Leu) + AMP + diphosphate. This chain is Leucine--tRNA ligase, found in Parabacteroides distasonis (strain ATCC 8503 / DSM 20701 / CIP 104284 / JCM 5825 / NCTC 11152).